A 119-amino-acid polypeptide reads, in one-letter code: MKNINLNRKEKRTERHKKVLRKFRKIDNDLPRLRITKTNQHIFAQLLDDNKNIVIASSSSVQLKLANGNIENSKKVGEDIAKKAISKKIKAINFDCGGSKYHGRVSALADAARKTGLKF.

The protein belongs to the universal ribosomal protein uL18 family. As to quaternary structure, part of the 50S ribosomal subunit; part of the 5S rRNA/L5/L18/L25 subcomplex. Contacts the 5S and 23S rRNAs.

Its function is as follows. This is one of the proteins that bind and probably mediate the attachment of the 5S RNA into the large ribosomal subunit, where it forms part of the central protuberance. This chain is Large ribosomal subunit protein uL18, found in Malacoplasma penetrans (strain HF-2) (Mycoplasma penetrans).